Consider the following 1499-residue polypeptide: MIFSQGSSPFKGDFSKIKFSIASPESVLAHSRGEVLKPETINYRTFKPERDGLMCEKIFGPTKDWECYCGKYKRVRYKGIICDRCGVEVTMKSVRRERMGHISLAVPVVHTWFFRSVPSKIGALLDLSTKELERIIYYEVYVVINPGDPGEKQGIKKLDRLTEEQYFQIITEYEDNQDLDDDDPAKFVAKMGGEAIHTLLKGLNLDESAVGLRKVLKESGSEQKRADALKRLKVVEAFRKSYEPQKKTRKKPGGLFPEDEMPEPYIFEGNKPEYMVMEVIPVIPPELRPLVPLEGGRFATSDLNDLYRRVIIRNNRLKKLIDIRAPEVILRNEKRMLQEAVDALFDNSRKANAVKTGESNRPLKSLSDALKGKQGRFRQNLLGKRVDYSGRSVIVVGPELKLHECGLPKSMAIELFQPFVIRRLVERGIAKSVKSAKKLIDKKDPIVWDVLEKVIDGRPVLLNRAPTLHRLGIQAFQPTLIEGKAIQIHPLVCTAFNADFDGDQMAVHVPLSQEAQLEASLLMLSSHNLILPQSGKPVTVPSQDMVLGMYYLTKSRIGENGQGNIFYSNEEVLIAHNEERLGLHALVFIKYDGHVEQKFDPVRLLDIISDDESEKKAWLKKEIEAKRLLVTTVGRVIFNQYVPEKIGFVNKVIDKKGAKELISKICSEVGNVQAAEFLDNIKQVGYHYAMKGGLSIGLADAIIPEAKIQLIKKATKESNKILREYNRGTLTENERYNQIVDVWQKVTNLVAEESYQKLRKDRVGFNPLFMMLDSGARGSREQVRQLTGMRGLIARPQKSMSGQPGEIIENPIISNLKEGLTVLEYFVSTHGARKGLSDTSLKTADAGYLTRRLHDVAQDVIVTIDDCGTTRGLHVERSIEEETGGQIKFSDKIRGRVASRDIWDTLKDEIVVPAGGIITEDIADAIQANIGVLEADIRSVLTCEAKQGICSKCYGTNLAVHKIVEIGEAVGVIAAQSIGEPGTQLTLRTFHQGGTAQGGIAETETKAVYEGQVEFENIRTVEQETINEDGMPEVRILVIQKNGRINIVDPDSGKVLKRHDVPHGASLHRSVGDLVKKEDVLFSSEPNSTQIIAELEGYVKFADIEKGVTYKEEVDPQTGYVQHVIINWRSKLRASETREPRIMIVSESGEILKTYPVPIKSNLFVEDNKKVSIGDILAKVPRNLDRVGGDITAGLPKVTELFEARIPSDPAIVSEIDGYVGFGSQRRSSKEIKVKNEFGEEKTYYVQVGKHVLANEGDEVTAGEPLTDGAISPQDILRIQGPNAVQQYLVNEIQKVYQINAGVEISDKHLEVIVRQMLQKVRVEEPGDTELLPGDLIDRTVFIEANTAIAEKVRVIDKGDAPARIQEDQLYKLKEITKLNRELRKNSKSLIVVEPAIQATSHPVLLGITSAALQTESVISAASFQETTKVLTDAAVAGKIDNLLGLKENVIVGKLIPAGTGLKAYRKLELNKVYPEAAEIAVPEVDEAAPASSDDDAAE.

Residues cysteine 67, cysteine 69, cysteine 82, and cysteine 85 each coordinate Zn(2+). Positions 499, 501, and 503 each coordinate Mg(2+). Cysteine 867, cysteine 943, cysteine 950, and cysteine 953 together coordinate Zn(2+).

It belongs to the RNA polymerase beta' chain family. As to quaternary structure, the RNAP catalytic core consists of 2 alpha, 1 beta, 1 beta' and 1 omega subunit. When a sigma factor is associated with the core the holoenzyme is formed, which can initiate transcription. The cofactor is Mg(2+). It depends on Zn(2+) as a cofactor.

The enzyme catalyses RNA(n) + a ribonucleoside 5'-triphosphate = RNA(n+1) + diphosphate. In terms of biological role, DNA-dependent RNA polymerase catalyzes the transcription of DNA into RNA using the four ribonucleoside triphosphates as substrates. The sequence is that of DNA-directed RNA polymerase subunit beta' from Prosthecochloris aestuarii (strain DSM 271 / SK 413).